Here is a 277-residue protein sequence, read N- to C-terminus: Phosphonates import ATP-binding protein PhnC 2 (277 aa).

Positions 5–253 constitute an ABC transporter domain; that stretch reads IHVQGLNKTF…FLNDLYGADA (249 aa). 37–44 contributes to the ATP binding site; it reads GASGSGKS.

The protein belongs to the ABC transporter superfamily. Phosphonates importer (TC 3.A.1.9.1) family. In terms of assembly, the complex is composed of two ATP-binding proteins (PhnC), two transmembrane proteins (PhnE) and a solute-binding protein (PhnD).

The protein localises to the cell inner membrane. The enzyme catalyses phosphonate(out) + ATP + H2O = phosphonate(in) + ADP + phosphate + H(+). Functionally, part of the ABC transporter complex PhnCDE involved in phosphonates import. Responsible for energy coupling to the transport system. In Pseudomonas syringae pv. syringae (strain B728a), this protein is Phosphonates import ATP-binding protein PhnC 2.